The sequence spans 292 residues: ATP synthase gamma chain (292 aa).

Belongs to the ATPase gamma chain family. As to quaternary structure, F-type ATPases have 2 components, CF(1) - the catalytic core - and CF(0) - the membrane proton channel. CF(1) has five subunits: alpha(3), beta(3), gamma(1), delta(1), epsilon(1). CF(0) has three main subunits: a, b and c.

Its subcellular location is the cell inner membrane. Produces ATP from ADP in the presence of a proton gradient across the membrane. The gamma chain is believed to be important in regulating ATPase activity and the flow of protons through the CF(0) complex. This Brucella canis (strain ATCC 23365 / NCTC 10854 / RM-666) protein is ATP synthase gamma chain.